Reading from the N-terminus, the 181-residue chain is Ubiquitin-conjugating enzyme E2 19 (181 aa).

Positions 1-10 (MATVNGYTGN) are enriched in polar residues. A disordered region spans residues 1–33 (MATVNGYTGNTPAATTPAATGSKQSAPPTKTVD). Positions 11–20 (TPAATTPAAT) are enriched in low complexity. Residues 36 to 181 (SVLKRLQSEL…VEKLYKPLNA (146 aa)) form the UBC core domain. Catalysis depends on Cys-120, which acts as the Glycyl thioester intermediate.

It belongs to the ubiquitin-conjugating enzyme family. Interacts with OR. Binds to LOT1. As to expression, expressed in all tissues with cell division activities and in mature leaves.

It is found in the cytoplasm. The protein resides in the nucleus. The catalysed reaction is S-ubiquitinyl-[E1 ubiquitin-activating enzyme]-L-cysteine + [E2 ubiquitin-conjugating enzyme]-L-cysteine = [E1 ubiquitin-activating enzyme]-L-cysteine + S-ubiquitinyl-[E2 ubiquitin-conjugating enzyme]-L-cysteine.. It participates in protein modification; protein ubiquitination. In terms of biological role, accepts the ubiquitin from the E1 complex and catalyzes its covalent attachment to other proteins. Part of the anaphase-promoting complex (APC). May have a key function during cell cycle and be involved in cyclin B1 degradation. Triggers OR ubiquitination that mediates its subsequent nuclear localization. Involved in the repression of early light-induced proteins (ELIPs, e.g. ELIP1 and ELIP2) expression, probably via OR nuclear relocalization. This Arabidopsis thaliana (Mouse-ear cress) protein is Ubiquitin-conjugating enzyme E2 19.